A 211-amino-acid chain; its full sequence is Uridine kinase (211 aa).

12-19 (GGSGSGKT) provides a ligand contact to ATP.

It belongs to the uridine kinase family.

It is found in the cytoplasm. It carries out the reaction uridine + ATP = UMP + ADP + H(+). The catalysed reaction is cytidine + ATP = CMP + ADP + H(+). It participates in pyrimidine metabolism; CTP biosynthesis via salvage pathway; CTP from cytidine: step 1/3. It functions in the pathway pyrimidine metabolism; UMP biosynthesis via salvage pathway; UMP from uridine: step 1/1. In Geobacillus kaustophilus (strain HTA426), this protein is Uridine kinase.